Reading from the N-terminus, the 122-residue chain is Double-headed protease inhibitor, submandibular gland (122 aa).

Kazal-like domains lie at glycine 10 to isoleucine 70 and glutamate 71 to serine 121. Cystine bridges form between cysteine 16/cysteine 50, cysteine 28/cysteine 47, cysteine 36/cysteine 68, cysteine 72/cysteine 101, cysteine 79/cysteine 98, and cysteine 87/cysteine 119.

The protein resides in the secreted. In terms of biological role, this inhibitor is composed of two homologous actively inhibiting halves: one which inhibits trypsin, the other which inhibits elastase. This Mustela lutreola (European mink) protein is Double-headed protease inhibitor, submandibular gland.